An 89-amino-acid polypeptide reads, in one-letter code: Small ribosomal subunit protein uS15 (89 aa).

It belongs to the universal ribosomal protein uS15 family. As to quaternary structure, part of the 30S ribosomal subunit. Forms a bridge to the 50S subunit in the 70S ribosome, contacting the 23S rRNA.

Functionally, one of the primary rRNA binding proteins, it binds directly to 16S rRNA where it helps nucleate assembly of the platform of the 30S subunit by binding and bridging several RNA helices of the 16S rRNA. Forms an intersubunit bridge (bridge B4) with the 23S rRNA of the 50S subunit in the ribosome. The polypeptide is Small ribosomal subunit protein uS15 (Methylobacterium nodulans (strain LMG 21967 / CNCM I-2342 / ORS 2060)).